The sequence spans 874 residues: Bifunctional uridylyltransferase/uridylyl-removing enzyme (874 aa).

Positions 1–332 are uridylyltransferase; the sequence is MTLQSPLTFR…NGGASEDAEI (332 aa). Residues 333–692 form a uridylyl-removing region; the sequence is IDEDFQRRGA…ISKKATRGGT (360 aa). Residues 451 to 573 form the HD domain; it reads VDEHSIRLLK…VRDEEYLEYL (123 aa). ACT domains lie at 693-777 and 800-874; these read EVFV…RTPN and LMEF…SVSA.

This sequence belongs to the GlnD family. Requires Mg(2+) as cofactor.

The catalysed reaction is [protein-PII]-L-tyrosine + UTP = [protein-PII]-uridylyl-L-tyrosine + diphosphate. The enzyme catalyses [protein-PII]-uridylyl-L-tyrosine + H2O = [protein-PII]-L-tyrosine + UMP + H(+). Uridylyltransferase (UTase) activity is inhibited by glutamine, while glutamine activates uridylyl-removing (UR) activity. Functionally, modifies, by uridylylation and deuridylylation, the PII regulatory proteins (GlnB and homologs), in response to the nitrogen status of the cell that GlnD senses through the glutamine level. Under low glutamine levels, catalyzes the conversion of the PII proteins and UTP to PII-UMP and PPi, while under higher glutamine levels, GlnD hydrolyzes PII-UMP to PII and UMP (deuridylylation). Thus, controls uridylylation state and activity of the PII proteins, and plays an important role in the regulation of nitrogen assimilation and metabolism. The protein is Bifunctional uridylyltransferase/uridylyl-removing enzyme of Vibrio campbellii (strain ATCC BAA-1116).